The primary structure comprises 144 residues: MPKNKGKGGKNRRRGKNENESEKRELVFKEDGQEYAQVIKMLGNGRLEAMCFDGVRRLCHIRGKLRKKVWINTSDIILIGLRDYQDNKADVILKYNADEARSLKAYGELPEHAKINETDTFGPGDDDEIQFDDIGDDDEDIDDI.

The segment covering 1–15 (MPKNKGKGGKNRRRG) has biased composition (basic residues). Disordered regions lie at residues 1–26 (MPKN…KREL) and 114–144 (KINE…IDDI). Residues 16 to 26 (KNENESEKREL) show a composition bias toward basic and acidic residues. Residues 22 to 96 (EKRELVFKED…NKADVILKYN (75 aa)) enclose the S1-like domain. A compositionally biased stretch (acidic residues) spans 124 to 144 (GDDDEIQFDDIGDDDEDIDDI).

This sequence belongs to the eIF-1A family. Component of the 43S pre-initiation complex (43S PIC), which is composed of the 40S ribosomal subunit, EIF1, eIF1A (EIF1AX), eIF3 complex, EIF5 and eIF2-GTP-initiator tRNA complex (eIF2 ternary complex). Interacts with EIF5; this interaction contributes to the maintenance of EIF1 within the open 43S PIC. Interacts through its C-terminal domain (CTD) with the CTD of EIF5B; from the location of the start codon by the 43S complex until the formation of the 80S complex.

It is found in the cytoplasm. Component of the 43S pre-initiation complex (43S PIC), which binds to the mRNA cap-proximal region, scans mRNA 5'-untranslated region, and locates the initiation codon. This protein enhances formation of the cap-proximal complex. Together with EIF1, facilitates scanning, start codon recognition, promotion of the assembly of 48S complex at the initiation codon (43S PIC becomes 48S PIC after the start codon is reached), and dissociation of aberrant complexes. After start codon location, together with EIF5B orients the initiator methionine-tRNA in a conformation that allows 60S ribosomal subunit joining to form the 80S initiation complex. Is released after 80S initiation complex formation, just after GTP hydrolysis by EIF5B, and before release of EIF5B. Its globular part is located in the A site of the 40S ribosomal subunit. Its interaction with EIF5 during scanning contribute to the maintenance of EIF1 within the open 43S PIC. In contrast to yeast orthologs, does not bind EIF1. This chain is Eukaryotic translation initiation factor 1A (Eif1a), found in Mus musculus (Mouse).